The sequence spans 283 residues: Bifunctional protein FolD (283 aa).

Residues 165–167, T192, and V233 each bind NADP(+); that span reads GRG.

It belongs to the tetrahydrofolate dehydrogenase/cyclohydrolase family. Homodimer.

It carries out the reaction (6R)-5,10-methylene-5,6,7,8-tetrahydrofolate + NADP(+) = (6R)-5,10-methenyltetrahydrofolate + NADPH. The enzyme catalyses (6R)-5,10-methenyltetrahydrofolate + H2O = (6R)-10-formyltetrahydrofolate + H(+). It functions in the pathway one-carbon metabolism; tetrahydrofolate interconversion. In terms of biological role, catalyzes the oxidation of 5,10-methylenetetrahydrofolate to 5,10-methenyltetrahydrofolate and then the hydrolysis of 5,10-methenyltetrahydrofolate to 10-formyltetrahydrofolate. This Mycolicibacterium smegmatis (strain ATCC 700084 / mc(2)155) (Mycobacterium smegmatis) protein is Bifunctional protein FolD.